Reading from the N-terminus, the 212-residue chain is Ribonuclease HII (212 aa).

The RNase H type-2 domain occupies 1-205 (MTICGVDEAG…VQDILDRASQ (205 aa)). 3 residues coordinate a divalent metal cation: Asp-7, Glu-8, and Asp-100.

The protein belongs to the RNase HII family. The cofactor is Mn(2+). Mg(2+) serves as cofactor.

It localises to the cytoplasm. It catalyses the reaction Endonucleolytic cleavage to 5'-phosphomonoester.. In terms of biological role, endonuclease that specifically degrades the RNA of RNA-DNA hybrids. This is Ribonuclease HII from Methanocorpusculum labreanum (strain ATCC 43576 / DSM 4855 / Z).